We begin with the raw amino-acid sequence, 285 residues long: N-alpha-acetyltransferase 40 (285 aa).

The region spanning 88–274 is the N-acetyltransferase domain; that stretch reads INYKLHKSRG…GGGRVVVPCD (187 aa). Substrate is bound by residues Tyr-116, 163–165, and Tyr-185; that span reads TEE. Acetyl-CoA is bound by residues 187–189 and 195–200; these read VHV and GHGIGR. A substrate-binding site is contributed by Thr-228. Residue Asn-233 coordinates acetyl-CoA.

This sequence belongs to the acetyltransferase family. NAA40 subfamily.

It is found in the nucleus. Its subcellular location is the cytoplasm. It catalyses the reaction N-terminal L-seryl-[histone H4] + acetyl-CoA = N-terminal N(alpha)-acetyl-L-seryl-[histone H4] + CoA + H(+). It carries out the reaction N-terminal L-seryl-[histone H2A] + acetyl-CoA = N-terminal N(alpha)-acetyl-L-seryl-[histone H2A] + CoA + H(+). In terms of biological role, N-alpha-acetyltransferase that specifically mediates the acetylation of the N-terminal residues of histones H4 and H2A. The chain is N-alpha-acetyltransferase 40 from Saccharomyces cerevisiae (strain ATCC 204508 / S288c) (Baker's yeast).